A 569-amino-acid chain; its full sequence is ATP-dependent RNA helicase HAS1 (569 aa).

Disordered stretches follow at residues 1–57 (MSKG…DQNF) and 71–110 (FKEE…FEDL). The segment covering 34 to 45 (EEEISSDEEEAD) has biased composition (acidic residues). The span at 71-85 (FKEEKKQKKNKEPKT) shows a compositional bias: basic and acidic residues. The short motif at 105-133 (DKFEDLGLSEPTMRAIKDMGFEKMTKVQE) is the Q motif element. The Helicase ATP-binding domain occupies 136-312 (IPPLLAGRDV…RISLRAGPLY (177 aa)). ATP is bound at residue 149-156 (AKTGSGKT). The DEAD box signature appears at 259-262 (DEAD). A Helicase C-terminal domain is found at 326-496 (GLEQGYVTCD…NIQSQLTKLI (171 aa)).

It belongs to the DEAD box helicase family. DDX18/HAS1 subfamily. In terms of assembly, associates in the nucleolus with the 60S and pre-60S ribosomal subunits.

Its subcellular location is the nucleus. It localises to the nucleolus. It catalyses the reaction ATP + H2O = ADP + phosphate + H(+). Its function is as follows. ATP-dependent RNA helicase involved in 40S ribosomal subunit biogenesis. Required for the processing and cleavage of 35S pre-rRNA at sites A0, A1, and A2, leading to mature 18S rRNA. The chain is ATP-dependent RNA helicase HAS1 (HAS1) from Meyerozyma guilliermondii (strain ATCC 6260 / CBS 566 / DSM 6381 / JCM 1539 / NBRC 10279 / NRRL Y-324) (Yeast).